Reading from the N-terminus, the 555-residue chain is Glutamine--tRNA ligase (555 aa).

The 'HIGH' region motif lies at 34 to 44 (PEPNGYLHIGH). ATP contacts are provided by residues 35 to 37 (EPN) and 41 to 47 (HIGHAKS). Residues aspartate 67 and tyrosine 212 each coordinate L-glutamine. ATP contacts are provided by residues threonine 231, 261-262 (RL), and 269-271 (MSK). A 'KMSKS' region motif is present at residues 268 to 272 (IMSKR).

Belongs to the class-I aminoacyl-tRNA synthetase family. In terms of assembly, monomer.

It is found in the cytoplasm. It carries out the reaction tRNA(Gln) + L-glutamine + ATP = L-glutaminyl-tRNA(Gln) + AMP + diphosphate. The sequence is that of Glutamine--tRNA ligase from Erwinia tasmaniensis (strain DSM 17950 / CFBP 7177 / CIP 109463 / NCPPB 4357 / Et1/99).